The chain runs to 211 residues: Small ribosomal subunit protein uS5 (211 aa).

The segment at 1–41 is disordered; that stretch reads MPGRERRDGGRSADDNKQNDRNERRGGGRRDDRRNQQQDER. The 64-residue stretch at 44–107 folds into the S5 DRBM domain; that stretch reads YIERVVTINR…EEARKNFFRV (64 aa).

This sequence belongs to the universal ribosomal protein uS5 family. In terms of assembly, part of the 30S ribosomal subunit. Contacts proteins S4 and S8.

Functionally, with S4 and S12 plays an important role in translational accuracy. In terms of biological role, located at the back of the 30S subunit body where it stabilizes the conformation of the head with respect to the body. The sequence is that of Small ribosomal subunit protein uS5 from Corynebacterium glutamicum (strain R).